The chain runs to 698 residues: Polyribonucleotide nucleotidyltransferase (698 aa).

Mg(2+) contacts are provided by Asp-490 and Asp-496. The 60-residue stretch at 557 to 616 folds into the KH domain; it reads PKVVTMTIKPDKIRDVIGPGGKKINEIIDETGVKLDIEQDGTIFIGAVDQAMINRAREII. The S1 motif domain maps to 626 to 694; that stretch reads GQTYQATVKR…KQGRVNASHR (69 aa).

It belongs to the polyribonucleotide nucleotidyltransferase family. Mg(2+) is required as a cofactor.

It is found in the cytoplasm. It catalyses the reaction RNA(n+1) + phosphate = RNA(n) + a ribonucleoside 5'-diphosphate. Functionally, involved in mRNA degradation. Catalyzes the phosphorolysis of single-stranded polyribonucleotides processively in the 3'- to 5'-direction. This chain is Polyribonucleotide nucleotidyltransferase, found in Staphylococcus aureus (strain MSSA476).